The primary structure comprises 289 residues: T-cell ecto-ADP-ribosyltransferase 2 (289 aa).

An N-terminal signal peptide occupies residues 1 to 20 (MTSKIFKFFLTWWLTQQVTG). 2 cysteine pairs are disulfide-bonded: Cys-41–Cys-246 and Cys-141–Cys-193. Positions 61–241 (EELKLEWEKA…IFLDSPERKK (181 aa)) constitute a TR mART core domain. Asn-79 carries N-linked (GlcNAc...) asparagine glycosylation. NAD(+) is bound by residues Tyr-98, Arg-146, and Gln-164. The active site involves Arg-146. Ser-167 is a catalytic residue. Ser-202 is an NAD(+) binding site. Glu-209 is a catalytic residue. Residue Asn-249 is glycosylated (N-linked (GlcNAc...) asparagine). A lipid anchor (GPI-anchor amidated serine) is attached at Ser-260. A propeptide spans 261 to 289 (ISGSRESCVSLFLVVLLGLLVQQLTLAEL) (removed in mature form).

It belongs to the Arg-specific ADP-ribosyltransferase family. Expressed in spleen, intestine and thymus.

The protein localises to the cell membrane. It catalyses the reaction L-arginyl-[protein] + NAD(+) = N(omega)-(ADP-D-ribosyl)-L-arginyl-[protein] + nicotinamide + H(+). The enzyme catalyses NAD(+) + H2O = ADP-D-ribose + nicotinamide + H(+). In terms of biological role, has both NAD(+) glycohydrolase and ADP-ribosyltransferase activity. This chain is T-cell ecto-ADP-ribosyltransferase 2 (Art2b), found in Mus musculus (Mouse).